A 283-amino-acid chain; its full sequence is Putative cytochrome b-c1 complex subunit Rieske-like protein 1 (283 aa).

The helical transmembrane segment at 116–149 (TEARKGFSYLVTGVTTVGVAYAAKNAVTQFVSSM) threads the bilayer. Residues 196–281 (EAAVELSQLR…YEFTSDDMVI (86 aa)) form the Rieske domain. Residues C226, H228, C245, and H248 each coordinate [2Fe-2S] cluster. A disulfide bridge connects residues C231 and C247.

It belongs to the Rieske iron-sulfur protein family. [2Fe-2S] cluster is required as a cofactor.

The protein resides in the membrane. The protein is Putative cytochrome b-c1 complex subunit Rieske-like protein 1 (UQCRFS1P1) of Homo sapiens (Human).